We begin with the raw amino-acid sequence, 221 residues long: MASSTSLPAPGSRPKKPLGKMADWFRQTLLKKPKKRPNSPESTSSDASQPTSQDSPLPPSLSSVTSPSLPPTHASDSGSSRWSKDYDVCVCHSEEDLVAAQDLVSYLEGSTASLRCFLQLRDATPGGAIVSELCQALSSSHCRVLLITPGFLQDPWCKYQMLQALTEAPGAEGCTIPLLSGLSRAAYPPELRFMYYVDGRGPDGGFRQVKEAVMRYLQTLS.

The disordered stretch occupies residues 1–82 (MASSTSLPAP…HASDSGSSRW (82 aa)). Residues 48–67 (SQPTSQDSPLPPSLSSVTSP) are compositionally biased toward low complexity. Positions 84–213 (KDYDVCVCHS…GGFRQVKEAV (130 aa)) constitute a TIR domain. Intrachain disulfides connect Cys-89–Cys-134 and Cys-142–Cys-174.

As to quaternary structure, homodimer. Also forms heterodimers with MYD88. May interact with PIK3AP1. Interacts with TLR4 and IRAK2 via their respective TIR domains. Interacts with BMX and TBK1. Interacts with EIF2AK2. Does not interact with IRAK1, nor TLR9. Interacts with TLR2. Interacts with RAGE/AGER. (Microbial infection) In case of infection, interacts with B.melitensis protein TcpB (AC Q8YF53); TcpB abolishes the TLR4-TIRAP interaction and downstream signaling. Post-translationally, phosphorylated by IRAK1 and IRAK4. Also phosphorylated by BTK. In terms of processing, polyubiquitinated. Polyubiquitination follows phosphorylation by BTK and leads to TIRAP degradation. Highly expressed in liver, kidney, spleen, skeletal muscle and heart. Also detected in peripheral blood leukocytes, lung, placenta, small intestine, thymus, colon and brain.

Its subcellular location is the cytoplasm. It is found in the cell membrane. It localises to the membrane. Adapter involved in TLR2, TLR4 and RAGE signaling pathways in the innate immune response. Acts via IRAK2 and TRAF-6, leading to the activation of NF-kappa-B, MAPK1, MAPK3 and JNK, and resulting in cytokine secretion and the inflammatory response. Positively regulates the production of TNF-alpha (TNF) and interleukin-6 (IL6). The sequence is that of Toll/interleukin-1 receptor domain-containing adapter protein (TIRAP) from Homo sapiens (Human).